The primary structure comprises 288 residues: uncharacterized protein (288 aa).

Over residues 1–12 (MTEGRCAQHPDG) the composition is skewed to basic and acidic residues. The segment at 1–20 (MTEGRCAQHPDGLDVQDVCD) is disordered.

Belongs to the class IV-like SAM-binding methyltransferase superfamily. RNA methyltransferase TrmH family.

This is an uncharacterized protein from Mycobacterium tuberculosis (strain ATCC 25618 / H37Rv).